The primary structure comprises 577 residues: Protein CBFA2T1 (577 aa).

Over residues 1–10 (MPDRTEKHST) the composition is skewed to basic and acidic residues. Residues 1 to 87 (MPDRTEKHST…SSSSLANQQL (87 aa)) are disordered. Position 14 is a phosphoserine (serine 14). Residues 42 to 59 (SSFTPTTLTNGTSHSPTA) are compositionally biased toward polar residues. Residues 68–87 (NGFSNGPSSSSSSSLANQQL) show a composition bias toward low complexity. The region spanning 93–188 (ARQLSKLKRF…NPAQYLAQHE (96 aa)) is the TAFH domain. The disordered stretch occupies residues 203–271 (SELLLDVNEN…LPHPTPPPPQ (69 aa)). Over residues 211-237 (ENGKRRTPDRTKENGFDREPLHSEHPS) the composition is skewed to basic and acidic residues. Over residues 244 to 258 (SPGQRYSPNNGLSYQ) the composition is skewed to polar residues. A compositionally biased stretch (pro residues) spans 262–271 (LPHPTPPPPQ). Residues 310–356 (QEEMIDHRLTDREWAEEWKHLDHLLNCIMDMVEKTRRSLTVLRRCQE) are important for oligomerization. Positions 310–356 (QEEMIDHRLTDREWAEEWKHLDHLLNCIMDMVEKTRRSLTVLRRCQE) are nervy homology region 2 (NHR2). A disordered region spans residues 374 to 396 (DLKKGGSSSSSHSRQQSPVNPDP). Residues 380 to 390 (SSSSSHSRQQS) show a composition bias toward low complexity. Serine 390 is modified (phosphoserine). The nervy homology region 3 (NHR3) stretch occupies residues 416-465 (EEIWKKAEEAVNEVKRQAMTELQKAVSEAERKAHDMITTERAKMERTVAE). Cysteine 488, cysteine 491, cysteine 499, cysteine 502, cysteine 508, cysteine 512, histidine 520, and cysteine 524 together coordinate Zn(2+). The MYND-type zinc finger occupies 488-524 (CWNCGRKASETCSGCNTARYCGSFCQHKDWEKHHHIC). The interval 529 to 577 (QAPQQGDTPAVSSSVTPSSGAGSPMDTPPAATPRSTTPGTPSTIETTPR) is disordered. Low complexity-rich tracts occupy residues 536 to 553 (TPAVSSSVTPSSGAGSPM) and 560 to 577 (TPRSTTPGTPSTIETTPR).

This sequence belongs to the CBFA2T family. Homotetramer. Heterotetramer with CBFA2T2 and CBFA2T3. Interacts with TCF12, SIN3A, HDAC1, HDAC2, HDAC3, NCOR1 and NCOR2. Interacts with ATN1 (via its N-terminus); the interaction enhances the transcriptional repression.

Its subcellular location is the nucleus. Its function is as follows. Transcriptional corepressor which facilitates transcriptional repression via its association with DNA-binding transcription factors and recruitment of other corepressors and histone-modifying enzymes. Can repress the expression of MMP7 in a ZBTB33-dependent manner. Can repress transactivation mediated by TCF12. Acts as a negative regulator of adipogenesis. The polypeptide is Protein CBFA2T1 (Runx1t1) (Mus musculus (Mouse)).